Here is a 430-residue protein sequence, read N- to C-terminus: Tol-Pal system protein TolB (430 aa).

Positions 1-21 (MKQALRVAFGFLILWASVLHA) are cleaved as a signal peptide.

The protein belongs to the TolB family. The Tol-Pal system is composed of five core proteins: the inner membrane proteins TolA, TolQ and TolR, the periplasmic protein TolB and the outer membrane protein Pal. They form a network linking the inner and outer membranes and the peptidoglycan layer.

The protein localises to the periplasm. Part of the Tol-Pal system, which plays a role in outer membrane invagination during cell division and is important for maintaining outer membrane integrity. TolB occupies a key intermediary position in the Tol-Pal system because it communicates directly with both membrane-embedded components, Pal in the outer membrane and TolA in the inner membrane. The protein is Tol-Pal system protein TolB of Escherichia coli O8 (strain IAI1).